A 349-amino-acid polypeptide reads, in one-letter code: Small ribosomal subunit protein uS2 (349 aa).

Residues glutamine 302 to serine 334 are disordered.

This sequence belongs to the universal ribosomal protein uS2 family.

The sequence is that of Small ribosomal subunit protein uS2 from Ureaplasma parvum serovar 3 (strain ATCC 27815 / 27 / NCTC 11736).